Consider the following 427-residue polypeptide: Gamma-glutamyl phosphate reductase (427 aa).

This sequence belongs to the gamma-glutamyl phosphate reductase family.

It localises to the cytoplasm. The enzyme catalyses L-glutamate 5-semialdehyde + phosphate + NADP(+) = L-glutamyl 5-phosphate + NADPH + H(+). It participates in amino-acid biosynthesis; L-proline biosynthesis; L-glutamate 5-semialdehyde from L-glutamate: step 2/2. Catalyzes the NADPH-dependent reduction of L-glutamate 5-phosphate into L-glutamate 5-semialdehyde and phosphate. The product spontaneously undergoes cyclization to form 1-pyrroline-5-carboxylate. The sequence is that of Gamma-glutamyl phosphate reductase from Rhizobium etli (strain ATCC 51251 / DSM 11541 / JCM 21823 / NBRC 15573 / CFN 42).